Consider the following 339-residue polypeptide: Anthranilate phosphoribosyltransferase (339 aa).

Residues glycine 81, 84 to 85 (GD), serine 89, 91 to 94 (NVST), 109 to 117 (KHGNRALSS), and alanine 121 each bind 5-phospho-alpha-D-ribose 1-diphosphate. An anthranilate-binding site is contributed by glycine 81. Serine 93 contributes to the Mg(2+) binding site. Residue asparagine 112 coordinates anthranilate. Arginine 167 contributes to the anthranilate binding site. Positions 226 and 227 each coordinate Mg(2+).

This sequence belongs to the anthranilate phosphoribosyltransferase family. In terms of assembly, homodimer. Requires Mg(2+) as cofactor.

The catalysed reaction is N-(5-phospho-beta-D-ribosyl)anthranilate + diphosphate = 5-phospho-alpha-D-ribose 1-diphosphate + anthranilate. Its pathway is amino-acid biosynthesis; L-tryptophan biosynthesis; L-tryptophan from chorismate: step 2/5. Functionally, catalyzes the transfer of the phosphoribosyl group of 5-phosphorylribose-1-pyrophosphate (PRPP) to anthranilate to yield N-(5'-phosphoribosyl)-anthranilate (PRA). In Rhodopseudomonas palustris (strain BisB18), this protein is Anthranilate phosphoribosyltransferase.